The chain runs to 269 residues: Staphylococcal secretory antigen ssaA2 (269 aa).

The N-terminal stretch at Met1–Ala27 is a signal peptide. A run of 7 repeats spans residues Tyr83–Asn85, Tyr88–Asn90, Tyr91–Asn93, Tyr97–Asn99, Tyr103–Asn105, Tyr106–Asn108, and Tyr115–Asn117. Residues Tyr83 to Tyr115 are 7 X 3 AA repeats of Y-[NS]-N. Positions Met148–His269 constitute a Peptidase C51 domain.

Its subcellular location is the secreted. Functionally, not known; immunogenic protein. This is Staphylococcal secretory antigen ssaA2 (ssaA2) from Staphylococcus aureus (strain MSSA476).